The sequence spans 203 residues: Sec-independent protein translocase protein TatB (203 aa).

Residues 1–21 (MFDIGWTELLVIAVVLIVVVG) form a helical membrane-spanning segment. A disordered region spans residues 179-203 (KPKRTTAVRKPATLKKPAQTKKDEA).

It belongs to the TatB family. The Tat system comprises two distinct complexes: a TatABC complex, containing multiple copies of TatA, TatB and TatC subunits, and a separate TatA complex, containing only TatA subunits. Substrates initially bind to the TatABC complex, which probably triggers association of the separate TatA complex to form the active translocon.

It localises to the cell inner membrane. Part of the twin-arginine translocation (Tat) system that transports large folded proteins containing a characteristic twin-arginine motif in their signal peptide across membranes. Together with TatC, TatB is part of a receptor directly interacting with Tat signal peptides. TatB may form an oligomeric binding site that transiently accommodates folded Tat precursor proteins before their translocation. The polypeptide is Sec-independent protein translocase protein TatB (Rhizobium johnstonii (strain DSM 114642 / LMG 32736 / 3841) (Rhizobium leguminosarum bv. viciae)).